We begin with the raw amino-acid sequence, 298 residues long: ATP synthase F(1) complex subunit gamma, mitochondrial (298 aa).

The transit peptide at 1-25 (MFSRAGVAGLSAWTVQPQWIQVRNM) directs the protein to the mitochondrion. N6-acetyllysine is present on lysine 39. Lysine 49 carries the post-translational modification N6-succinyllysine. N6-acetyllysine is present on lysine 55. The residue at position 115 (lysine 115) is an N6-acetyllysine; alternate. Residue lysine 115 is modified to N6-succinyllysine; alternate. At serine 146 the chain carries Phosphoserine. Position 154 is an N6-acetyllysine; alternate (lysine 154). Lysine 154 is modified (N6-succinyllysine; alternate). Lysine 197 is subject to N6-acetyllysine. Lysine 270 is modified (N6-succinyllysine).

Belongs to the ATPase gamma chain family. Component of the ATP synthase complex composed at least of ATP5F1A/subunit alpha, ATP5F1B/subunit beta, ATP5MC1/subunit c (homooctomer), MT-ATP6/subunit a, MT-ATP8/subunit 8, ATP5ME/subunit e, ATP5MF/subunit f, ATP5MG/subunit g, ATP5MK/subunit k, ATP5MJ/subunit j, ATP5F1C/subunit gamma, ATP5F1D/subunit delta, ATP5F1E/subunit epsilon, ATP5PF/subunit F6, ATP5PB/subunit b, ATP5PD/subunit d, ATP5PO/subunit OSCP. ATP synthase complex consists of a soluble F(1) head domain (subunits alpha(3) and beta(3)) - the catalytic core - and a membrane F(0) domain - the membrane proton channel (subunits c, a, 8, e, f, g, k and j). These two domains are linked by a central stalk (subunits gamma, delta, and epsilon) rotating inside the F1 region and a stationary peripheral stalk (subunits F6, b, d, and OSCP). Interacts with FLVCR2; this interaction occurs in the absence of heme and is disrupted upon heme binding.

Its subcellular location is the mitochondrion inner membrane. Functionally, subunit gamma, of the mitochondrial membrane ATP synthase complex (F(1)F(0) ATP synthase or Complex V) that produces ATP from ADP in the presence of a proton gradient across the membrane which is generated by electron transport complexes of the respiratory chain. ATP synthase complex consist of a soluble F(1) head domain - the catalytic core - and a membrane F(1) domain - the membrane proton channel. These two domains are linked by a central stalk rotating inside the F(1) region and a stationary peripheral stalk. During catalysis, ATP synthesis in the catalytic domain of F(1) is coupled via a rotary mechanism of the central stalk subunits to proton translocation. In vivo, can only synthesize ATP although its ATP hydrolase activity can be activated artificially in vitro. With the central stalk subunit delta, is essential for the biogenesis of F(1) catalytic part of the ATP synthase complex namely in the formation of F1 assembly intermediate. The protein is ATP synthase F(1) complex subunit gamma, mitochondrial of Bos taurus (Bovine).